Consider the following 200-residue polypeptide: uncharacterized protein (200 aa).

Positions 1–21 are disordered; the sequence is MSNSAQRDARNSRDESARASD. Basic and acidic residues predominate over residues 7 to 21; sequence RDARNSRDESARASD.

This is an uncharacterized protein from Mycobacterium tuberculosis (strain CDC 1551 / Oshkosh).